The following is a 548-amino-acid chain: Glucan 1,4-alpha-maltotetraohydrolase (548 aa).

The N-terminal stretch at 1 to 21 (MSHILRAAVLAAMLLPLPSMA) is a signal peptide. Asp22, Gln23, His34, Asp37, and Glu38 together coordinate Ca(2+). 99–100 (YF) lines the substrate pocket. Asn137 contacts Ca(2+). His138 is a binding site for substrate. The cysteines at positions 161 and 171 are disulfide-linked. Residues Asp172 and Asp175 each contribute to the Ca(2+) site. 177 to 181 (FIGGD) serves as a coordination point for substrate. Asp183 is a Ca(2+) binding site. Arg212 is a substrate binding site. Catalysis depends on Asp214, which acts as the Nucleophile. 217-218 (RG) serves as a coordination point for substrate. Gly218 is a binding site for Ca(2+). Residues Cys237 and Cys272 are joined by a disulfide bond. Glu240 functions as the Proton donor in the catalytic mechanism. His314 and Gln326 together coordinate substrate. The CBM20 domain maps to 446–548 (GEPGALVSVS…SEGATTVGRL (103 aa)). Polar residues predominate over residues 529–542 (QGGANNSLTPSEGA). Residues 529–548 (QGGANNSLTPSEGATTVGRL) are disordered.

It belongs to the glycosyl hydrolase 13 family. As to quaternary structure, monomer. It depends on Ca(2+) as a cofactor.

It localises to the secreted. The enzyme catalyses Hydrolysis of (1-&gt;4)-alpha-D-glucosidic linkages in amylaceous polysaccharides, to remove successive maltotetraose residues from the non-reducing chain ends.. The protein operates within glycan degradation; starch degradation. This is Glucan 1,4-alpha-maltotetraohydrolase (amyP) from Stutzerimonas stutzeri (Pseudomonas stutzeri).